The primary structure comprises 95 residues: MTTTTETWQLFAHGRVQGVGYRAACADRATSLGLGGWVRNRVDGRVEVLASGPRERLEALRVWMEAGPPAAQVSKVEVAQAAPQLFDRFDWLPTA.

Residues 7 to 93 (TWQLFAHGRV…QLFDRFDWLP (87 aa)) form the Acylphosphatase-like domain. Catalysis depends on residues Arg-22 and Asn-40.

The protein belongs to the acylphosphatase family.

It carries out the reaction an acyl phosphate + H2O = a carboxylate + phosphate + H(+). This is Acylphosphatase (acyP) from Cupriavidus metallidurans (strain ATCC 43123 / DSM 2839 / NBRC 102507 / CH34) (Ralstonia metallidurans).